The sequence spans 89 residues: Small ribosomal subunit protein uS14 (89 aa).

This sequence belongs to the universal ribosomal protein uS14 family. As to quaternary structure, part of the 30S ribosomal subunit. Contacts proteins S3 and S10.

In terms of biological role, binds 16S rRNA, required for the assembly of 30S particles and may also be responsible for determining the conformation of the 16S rRNA at the A site. The chain is Small ribosomal subunit protein uS14 from Chlorobium chlorochromatii (strain CaD3).